A 188-amino-acid polypeptide reads, in one-letter code: Small ribosomal subunit protein bS16 (188 aa).

The interval 155–188 (IAAASATEEAATEEVAEAAEEAPAAEENNETTEA) is disordered. The span at 164–188 (AATEEVAEAAEEAPAAEENNETTEA) shows a compositional bias: acidic residues.

This sequence belongs to the bacterial ribosomal protein bS16 family.

This chain is Small ribosomal subunit protein bS16, found in Flavobacterium johnsoniae (strain ATCC 17061 / DSM 2064 / JCM 8514 / BCRC 14874 / CCUG 350202 / NBRC 14942 / NCIMB 11054 / UW101) (Cytophaga johnsonae).